The primary structure comprises 584 residues: PE-PGRS family protein PE_PGRS11 (584 aa).

Residues 1-92 enclose the PE domain; the sequence is MSFVIVARDA…AATSYAVTEV (92 aa). The Tele-phosphohistidine intermediate role is filled by His-290. Glu-365 serves as the catalytic Proton donor/acceptor. The segment at 384 to 584 is phosphoglycerate mutase; that stretch reads YLVGPIAWTL…LPIGLPSLIP (201 aa).

It in the N-terminal section; belongs to the mycobacterial PE family. PGRS subfamily. The protein in the C-terminal section; belongs to the phosphoglycerate mutase family. As to quaternary structure, interacts with human TLR2. Mg(2+) serves as cofactor.

Its subcellular location is the secreted. It localises to the cell wall. The protein localises to the cell surface. The catalysed reaction is (2R)-2-phosphoglycerate = (2R)-3-phosphoglycerate. Functionally, induces maturation and activation of human dendritic cells (DCs), via TLR2-dependent activation of ERK1/2, p38 MAPK, and NF-kappa-B signaling pathways, and enhances the ability of DCs to stimulate CD4(+) T cells. By activating DCs, could potentially contribute to the initiation of innate immune responses during tuberculosis infection and hence regulate the clinical course of tuberculosis. Involved in resistance to oxidative stress, via TLR2-dependent activation of the PI3K-ERK1/2-NF-kappa-B signaling pathway and expression of COX-2 and Bcl2. Also abolishes H(2)O(2)-triggered activation of p38 MAPK. The chain is PE-PGRS family protein PE_PGRS11 from Mycobacterium tuberculosis (strain ATCC 25618 / H37Rv).